The sequence spans 176 residues: Probable chorismate pyruvate-lyase (176 aa).

R70, L108, and E166 together coordinate substrate.

Belongs to the UbiC family.

It localises to the cytoplasm. It catalyses the reaction chorismate = 4-hydroxybenzoate + pyruvate. It participates in cofactor biosynthesis; ubiquinone biosynthesis. Removes the pyruvyl group from chorismate, with concomitant aromatization of the ring, to provide 4-hydroxybenzoate (4HB) for the ubiquinone pathway. This is Probable chorismate pyruvate-lyase from Dechloromonas aromatica (strain RCB).